A 760-amino-acid chain; its full sequence is Serine/threonine-protein kinase Haspin homolog ALK1 (760 aa).

2 positions are modified to phosphoserine: Ser-76 and Ser-79. 4 disordered regions span residues 76–100 (SDAS…KKRW), 123–153 (SSFT…SSLD), 187–264 (DDIS…STVS), and 362–408 (KRNS…CSYS). Polar residues predominate over residues 78 to 95 (ASLNVTTGNNTSRKTTSN). The KEN box signature appears at 200 to 202 (KEN). The span at 209–220 (KKNSSIASTSSE) shows a compositional bias: polar residues. A D box motif is present at residues 224–232 (RTPLKPLVN). Over residues 237-250 (PTSQPQQQQPLYNA) the composition is skewed to polar residues. The span at 251–264 (SLSSRRSSISSTVS) shows a compositional bias: low complexity. The segment covering 362 to 386 (KRNSQSSLKHKSSHASLQKFKRNKG) has biased composition (basic residues). The segment covering 398-408 (NSSNDDSCSYS) has biased composition (low complexity). One can recognise a Protein kinase domain in the interval 468–760 (NCDIKRILNP…NTGDLLKLYK (293 aa)). ATP contacts are provided by residues 474–482 (ILNPAKGDV) and Lys-510.

It belongs to the protein kinase superfamily. Ser/Thr protein kinase family. Haspin subfamily. In terms of processing, periodically phosphorylated during the cell cycle with a phosphorylation peak during mitosis and hyperphosphorylated after DNA damage.

It catalyses the reaction L-seryl-[protein] + ATP = O-phospho-L-seryl-[protein] + ADP + H(+). The enzyme catalyses L-threonyl-[protein] + ATP = O-phospho-L-threonyl-[protein] + ADP + H(+). Serine/threonine haspin-like protein kinase involved in cell cycle regulation. The polypeptide is Serine/threonine-protein kinase Haspin homolog ALK1 (ALK1) (Saccharomyces cerevisiae (strain ATCC 204508 / S288c) (Baker's yeast)).